The sequence spans 361 residues: Peptide chain release factor 1 (361 aa).

Position 237 is an N5-methylglutamine (Q237). Basic and acidic residues predominate over residues 285 to 296; the sequence is DEKRRSAEESTR. Residues 285–305 form a disordered region; the sequence is DEKRRSAEESTRRNLVSSGDR.

The protein belongs to the prokaryotic/mitochondrial release factor family. Methylated by PrmC. Methylation increases the termination efficiency of RF1.

The protein resides in the cytoplasm. Peptide chain release factor 1 directs the termination of translation in response to the peptide chain termination codons UAG and UAA. The protein is Peptide chain release factor 1 of Shewanella halifaxensis (strain HAW-EB4).